Consider the following 720-residue polypeptide: Phosphatase and actin regulator 4 (720 aa).

The segment at 1–48 is disordered; the sequence is MGQPRFSRPVHPAAAAEEVDHPPSDAGMGVDVLESGDTTPPTKRKSKF. One copy of the RPEL 1 repeat lies at 74–99; that stretch reads EVLERKISMRKPREELVKRGVLLEDP. Disordered regions lie at residues 294 to 417, 454 to 568, and 610 to 648; these read SGTG…GLPR, NDGF…DTLA, and RPTA…LSQR. Pro residues predominate over residues 346–368; sequence TYPPPSPSPPLPTHIPPEPPRMP. The segment covering 393-405 has biased composition (basic and acidic residues); sequence KDFRSLEVSKRTA. Composition is skewed to acidic residues over residues 481–494, 521–534, and 542–551; these read DDEE…EEEQ, EEQE…DSDS, and DDEEDEEEDE. RPEL repeat units lie at residues 601–626 and 639–664; these read TTLI…QPKN and RRLT…RFNE. A compositionally biased stretch (basic and acidic residues) spans 626–636; sequence NEADRQAEKRE. Positions 637–646 are enriched in basic residues; sequence IKRRLTRKLS.

The protein belongs to the phosphatase and actin regulator family. In terms of assembly, binds PPP1CA and actin.

The protein localises to the cytoplasm. It is found in the cell projection. It localises to the lamellipodium. Functionally, regulator of protein phosphatase 1 (PP1) required for neural tube and optic fissure closure, and enteric neural crest cell (ENCCs) migration during development. Acts as an activator of PP1. During neural tube closure, localizes to the ventral neural tube and activates PP1, leading to down-regulate cell proliferation within cranial neural tissue and the neural retina. Also acts as a regulator of migration of enteric neural crest cells (ENCCs) by activating PP1, leading to repression of the integrin signaling through the RHO/ROCK pathway. The polypeptide is Phosphatase and actin regulator 4 (PHACTR4) (Gallus gallus (Chicken)).